Reading from the N-terminus, the 520-residue chain is DNA mismatch repair protein MutL (520 aa).

The protein belongs to the DNA mismatch repair MutL/HexB family.

This protein is involved in the repair of mismatches in DNA. It is required for dam-dependent methyl-directed DNA mismatch repair. May act as a 'molecular matchmaker', a protein that promotes the formation of a stable complex between two or more DNA-binding proteins in an ATP-dependent manner without itself being part of a final effector complex. This chain is DNA mismatch repair protein MutL, found in Persephonella marina (strain DSM 14350 / EX-H1).